We begin with the raw amino-acid sequence, 194 residues long: MSLRILAKRSSSIWMKTRVTPALISPITITTRFNSTTTTAPSHKDDVRPVDPKISKIVQDISQLTLLETSSLINELKTVLNIPEISMPMGGFMAGAAGAGAGNVPSSTGEAGSGAEEEAKPEAKTVFTVKLDSFDTKTKAKVIKEVKGLLGLSLVEAKKFVEAAPKVLKENVAKDDAEKIKKTLEDLGAKVSLE.

A mitochondrion-targeting transit peptide spans 1–33 (MSLRILAKRSSSIWMKTRVTPALISPITITTRF). N-linked (GlcNAc...) asparagine glycosylation occurs at Asn-34. The segment at 101–120 (AGNVPSSTGEAGSGAEEEAK) is disordered. The segment covering 105 to 114 (PSSTGEAGSG) has biased composition (low complexity).

It belongs to the bacterial ribosomal protein bL12 family. Component of the mitochondrial large ribosomal subunit (mt-LSU). Mature yeast 74S mitochondrial ribosomes consist of a small (37S) and a large (54S) subunit. The 37S small subunit contains a 15S ribosomal RNA (15S mt-rRNA) and 34 different proteins. The 54S large subunit contains a 21S rRNA (21S mt-rRNA) and 46 different proteins. Post-translationally, N-glycosylated.

It localises to the mitochondrion. Component of the mitochondrial ribosome (mitoribosome), a dedicated translation machinery responsible for the synthesis of mitochondrial genome-encoded proteins, including at least some of the essential transmembrane subunits of the mitochondrial respiratory chain. The mitoribosomes are attached to the mitochondrial inner membrane and translation products are cotranslationally integrated into the membrane. This Saccharomyces cerevisiae (strain ATCC 204508 / S288c) (Baker's yeast) protein is Large ribosomal subunit protein bL12m (MNP1).